A 1018-amino-acid polypeptide reads, in one-letter code: MFYKACPSTLTCSKWIHSIIKTKKFLYCRHYSSKSFIDNAPLRINPVGVQYLSPALQNQVFPQQNTQISQLHLDLAKFHLAKHQLLNKETIKLPSFNFRLPPLQGKTISEHFYNIGLEFAEPHLSKAIKFSKIDTPVQPKTWKRQPGWTKYAKDGSISCVPYPDSDCMVFDVEVLYKVSPFAVVATAVSEDAWYCWLSPWLLGKSENDRQLIPSNPKGALFVGHNVSFDRQRIREEYNIKSSRNVFLDTMSLHVATHGMCSRQKPTWFKARKAYIRSQSTETSEDDDSSSFDDDYQNYLKQEPWLAHSSVNSLKDVAKFHCNITLDKSKRDDFASLEKEPILQKLNELITYCAHDTYSTHQVFKKVFPQFLEVCPHPATFSAMLSLGSVFLPVNHSWTRYINGVEEQYQQMIQLVDQKLSQYAEKAKDLINTKDTVLKDPWLRQLDWTPCNLYRKLKKATQEVPVVPKWYKKAYCKTEKRAVITAKSRLAPILLRLKWKKHPLAWSDTYGWVFSVERTSKDEIEMLLDQGLVPCSREEDTKLDYNNYIFFKVPHKDGPEARCGSPLSKSYQRYFEEGILQSDYEVAKKALEMSASCSYWSSARDRIRSQMVVWDKDAELGVPSSVDGFGIILPCIIPMGTVTRRAVENTWLTASNSKKNRLGSELKAMIRAPDGYTFVGADVDSEELWIVALMGDSQFRLHGATALGMMTLEGKKSEGTDLHSKTAAILGVSRDSAKVFNYGRLYGAGLKHTTLLLMQMNPTLKTAEAKELAKKLYASTKGVKSKMSKRLQEMGLPKLTFWSQGTESFVFNKLEAMAQLPSPRTPVLDAGITQALSSKNLSKNSFMTSRVNWAIQSSAVDYLHLLLVSMNHLIKKYYLEARLSLTVHDEVRYLSSDKDKYRVAFALQVANLWTRAFFCQRLGINELPQSVAFFSSVDIDHVLRKDVKMDCVTPSNKVPIPPGEELTIESVLEKLEQSGQSLEPLEQIQCFVDVKATTSAEITEEDKKNIAYLKAQAFY.

Belongs to the DNA polymerase type-A family. It depends on Mg(2+) as a cofactor.

Its subcellular location is the mitochondrion. It carries out the reaction DNA(n) + a 2'-deoxyribonucleoside 5'-triphosphate = DNA(n+1) + diphosphate. Functionally, involved in the replication of mitochondrial DNA. The protein is DNA polymerase gamma (mip1) of Schizosaccharomyces pombe (strain 972 / ATCC 24843) (Fission yeast).